A 551-amino-acid polypeptide reads, in one-letter code: Intestinal-type alkaline phosphatase 2 (551 aa).

A signal peptide spans 1 to 19; the sequence is MQGAWVLLLLGFRLQLSLS. Aspartate 61 provides a ligand contact to Mg(2+). The Zn(2+) site is built by aspartate 61 and serine 111. Residue serine 111 is the Phosphoserine intermediate of the active site. A disulfide bond links cysteine 140 and cysteine 202. Residue asparagine 141 is glycosylated (N-linked (GlcNAc...) asparagine). Serine 174 contacts Mg(2+). Glutamate 235 contacts Ca(2+). Asparagine 241 is a glycosylation site (N-linked (GlcNAc...) asparagine). Phenylalanine 288, glutamate 289, and aspartate 304 together coordinate Ca(2+). A Mg(2+)-binding site is contributed by glutamate 330. Residues aspartate 335, histidine 339, aspartate 376, and histidine 377 each coordinate Zn(2+). The N-linked (GlcNAc...) asparagine glycan is linked to asparagine 426. Cysteine 485 and cysteine 492 are joined by a disulfide. Residues 496 to 537 form a disordered region; the sequence is PPADENRPTTPVQNSTTTTTTTTTTTTTTTTTRVQNSASSLG. The N-linked (GlcNAc...) asparagine glycan is linked to asparagine 509. Low complexity predominate over residues 511-527; sequence TTTTTTTTTTTTTTTTT. Polar residues predominate over residues 528–537; it reads RVQNSASSLG. The GPI-anchor amidated asparagine moiety is linked to residue asparagine 531. Residues 532 to 551 constitute a propeptide, removed in mature form; sequence SASSLGPATAPLAWHYWPRR.

The protein belongs to the alkaline phosphatase family. As to quaternary structure, homodimer. Requires Mg(2+) as cofactor. Zn(2+) serves as cofactor. The cofactor is Ca(2+).

It localises to the cell membrane. The enzyme catalyses a phosphate monoester + H2O = an alcohol + phosphate. Alkaline phosphatase that can hydrolyze various phosphate compounds. The protein is Intestinal-type alkaline phosphatase 2 of Rattus norvegicus (Rat).